A 491-amino-acid polypeptide reads, in one-letter code: Aspartyl/glutamyl-tRNA(Asn/Gln) amidotransferase subunit B (491 aa).

The protein belongs to the GatB/GatE family. GatB subfamily. As to quaternary structure, heterotrimer of A, B and C subunits.

The enzyme catalyses L-glutamyl-tRNA(Gln) + L-glutamine + ATP + H2O = L-glutaminyl-tRNA(Gln) + L-glutamate + ADP + phosphate + H(+). It carries out the reaction L-aspartyl-tRNA(Asn) + L-glutamine + ATP + H2O = L-asparaginyl-tRNA(Asn) + L-glutamate + ADP + phosphate + 2 H(+). Functionally, allows the formation of correctly charged Asn-tRNA(Asn) or Gln-tRNA(Gln) through the transamidation of misacylated Asp-tRNA(Asn) or Glu-tRNA(Gln) in organisms which lack either or both of asparaginyl-tRNA or glutaminyl-tRNA synthetases. The reaction takes place in the presence of glutamine and ATP through an activated phospho-Asp-tRNA(Asn) or phospho-Glu-tRNA(Gln). The protein is Aspartyl/glutamyl-tRNA(Asn/Gln) amidotransferase subunit B of Burkholderia cenocepacia (strain ATCC BAA-245 / DSM 16553 / LMG 16656 / NCTC 13227 / J2315 / CF5610) (Burkholderia cepacia (strain J2315)).